Here is a 347-residue protein sequence, read N- to C-terminus: Putative phosphoesterase 078R (347 aa).

Residues Asp-52, Asn-87, and His-211 each coordinate a divalent metal cation.

This sequence belongs to the metallophosphoesterase superfamily. IIV-6 244L family.

In Invertebrate iridescent virus 3 (IIV-3), this protein is Putative phosphoesterase 078R.